Here is a 626-residue protein sequence, read N- to C-terminus: Chaperone protein HtpG (626 aa).

Positions 1–339 are a; substrate-binding; the sequence is MSQNQETRGF…SNDLPLNVSR (339 aa). The segment at 340 to 555 is b; the sequence is EILQDNKITA…NDQMTTQMAK (216 aa). The segment at 556-626 is c; the sequence is LFAAAGQPVP…FIKRINKLLG (71 aa).

It belongs to the heat shock protein 90 family. In terms of assembly, homodimer.

It localises to the cytoplasm. In terms of biological role, molecular chaperone. Has ATPase activity. This Haemophilus influenzae (strain 86-028NP) protein is Chaperone protein HtpG.